The sequence spans 276 residues: Secreted RxLR effector protein 150 (276 aa).

An N-terminal signal peptide occupies residues 1-18 (MRNIAFLIGLFFIGYSSC). The RxLR-dEER signature appears at 49–64 (RTLQADDRERILAEER).

Belongs to the RxLR effector family.

The protein localises to the secreted. The protein resides in the host nucleus. It is found in the host cytoplasm. Functionally, secreted effector that partially suppresses the host cell death induced by cell death-inducing proteins. The chain is Secreted RxLR effector protein 150 from Plasmopara viticola (Downy mildew of grapevine).